An 82-amino-acid polypeptide reads, in one-letter code: Sec-independent protein translocase protein TatA (82 aa).

The helical transmembrane segment at 1 to 21 (MGIFDWKHWIVILIVVVLVFG) threads the bilayer. The segment at 43–82 (VNTEEDDKKEQPAAQPAQPLNQPHTIDAQAQKVEEPARKD) is disordered.

It belongs to the TatA/E family. As to quaternary structure, the Tat system comprises two distinct complexes: a TatABC complex, containing multiple copies of TatA, TatB and TatC subunits, and a separate TatA complex, containing only TatA subunits. Substrates initially bind to the TatABC complex, which probably triggers association of the separate TatA complex to form the active translocon.

The protein resides in the cell inner membrane. Its function is as follows. Part of the twin-arginine translocation (Tat) system that transports large folded proteins containing a characteristic twin-arginine motif in their signal peptide across membranes. TatA could form the protein-conducting channel of the Tat system. The protein is Sec-independent protein translocase protein TatA of Pseudomonas paraeruginosa (strain DSM 24068 / PA7) (Pseudomonas aeruginosa (strain PA7)).